Consider the following 296-residue polypeptide: Nitrogenase iron protein 2 (296 aa).

Position 11–18 (11–18) interacts with ATP; that stretch reads GKGGIGKS. Cys99 serves as a coordination point for [4Fe-4S] cluster. At Arg102 the chain carries ADP-ribosylarginine; by dinitrogenase reductase ADP-ribosyltransferase. [4Fe-4S] cluster is bound at residue Cys133.

The protein belongs to the NifH/BchL/ChlL family. As to quaternary structure, homodimer. It depends on [4Fe-4S] cluster as a cofactor. Post-translationally, the reversible ADP-ribosylation of Arg-102 inactivates the nitrogenase reductase and regulates nitrogenase activity.

The enzyme catalyses N2 + 8 reduced [2Fe-2S]-[ferredoxin] + 16 ATP + 16 H2O = H2 + 8 oxidized [2Fe-2S]-[ferredoxin] + 2 NH4(+) + 16 ADP + 16 phosphate + 6 H(+). Functionally, the key enzymatic reactions in nitrogen fixation are catalyzed by the nitrogenase complex, which has 2 components: the iron protein and the molybdenum-iron protein. The sequence is that of Nitrogenase iron protein 2 (nifH2) from Azorhizobium caulinodans (strain ATCC 43989 / DSM 5975 / JCM 20966 / LMG 6465 / NBRC 14845 / NCIMB 13405 / ORS 571).